We begin with the raw amino-acid sequence, 318 residues long: Acetyl-coenzyme A carboxylase carboxyl transferase subunit alpha (318 aa).

One can recognise a CoA carboxyltransferase C-terminal domain in the interval N32–R293.

Belongs to the AccA family. As to quaternary structure, acetyl-CoA carboxylase is a heterohexamer composed of biotin carboxyl carrier protein (AccB), biotin carboxylase (AccC) and two subunits each of ACCase subunit alpha (AccA) and ACCase subunit beta (AccD).

It is found in the cytoplasm. The catalysed reaction is N(6)-carboxybiotinyl-L-lysyl-[protein] + acetyl-CoA = N(6)-biotinyl-L-lysyl-[protein] + malonyl-CoA. The protein operates within lipid metabolism; malonyl-CoA biosynthesis; malonyl-CoA from acetyl-CoA: step 1/1. Its function is as follows. Component of the acetyl coenzyme A carboxylase (ACC) complex. First, biotin carboxylase catalyzes the carboxylation of biotin on its carrier protein (BCCP) and then the CO(2) group is transferred by the carboxyltransferase to acetyl-CoA to form malonyl-CoA. This chain is Acetyl-coenzyme A carboxylase carboxyl transferase subunit alpha, found in Saccharophagus degradans (strain 2-40 / ATCC 43961 / DSM 17024).